A 192-amino-acid polypeptide reads, in one-letter code: uncharacterized protein (192 aa).

Positions 29–160 (QRQAAVLIPV…PLDVYRRGNS (132 aa)) constitute a Nudix hydrolase domain. The short motif at 67–89 (GAVDSTDASLIAAALREAQEEVA) is the Nudix box element. The Mg(2+) site is built by Glu83 and Glu87.

It belongs to the Nudix hydrolase family. PCD1 subfamily. The cofactor is Mn(2+). Requires Mg(2+) as cofactor.

Its function is as follows. Probably mediates the hydrolysis of some nucleoside diphosphate derivatives. This is an uncharacterized protein from Salmonella choleraesuis (strain SC-B67).